Here is a 101-residue protein sequence, read N- to C-terminus: Putative metal transport protein HQ_3622A (101 aa).

An N-terminal signal peptide occupies residues 1-32 (MKIISMSMDSWIQRAALMLLGLVIVAPFFGWT). Residues 75–95 (IGTLISAGVGTVLTLIVAFGA) traverse the membrane as a helical segment.

The protein resides in the cell membrane. In terms of biological role, may be involved in metal transport. This is Putative metal transport protein HQ_3622A from Haloquadratum walsbyi (strain DSM 16790 / HBSQ001).